The chain runs to 72 residues: uncharacterized protein (72 aa).

Belongs to the asfivirus I73R family.

The protein localises to the virion. This is an uncharacterized protein from Ornithodoros (relapsing fever ticks).